A 286-amino-acid chain; its full sequence is MSAPLDAALHALQEEQARLKMRLWDLQQLRKELGDSPKDKVPFSVPKIPLVFRGHTQQDPEVPKSLVSNLRIHCPLLAGSALITFDDPKVAEQVLQQKEHTINMEECRLRVQVQPLELPMVTTIQMSSQLSGRRVLVTGFPASLRLSEEELLDKLEIFFGKTRNGGGDVDVRELLPGSVMLGFARDGVAQRLCQIGQFTVPLGGQQVPLRVSPYVNGEIQKAEIRSQPVPRSVLVLNIPDILDGPELHDVLEIHFQKPTRGGGEVEALTVVPQGQQGLAVFTSESG.

The tract at residues 5–26 (LDAALHALQEEQARLKMRLWDL) is leucine-zipper. NID domains follow at residues 81 to 170 (ALIT…GDVD) and 183 to 266 (FARD…GEVE).

Belongs to the NMI family. Homodimer. Also interacts with BATF. Interacts with TRIM21. Interacts with NMI; the interaction is direct and is facilitated by TRIM21. Post-translationally, phosphorylated. Dephosphorylation correlates with the formation of a complex with NMI. As to expression, expressed in a wide range of cell types, including fibroblasts, macrophages, and epithelial cells.

It localises to the cytoplasm. The protein resides in the nucleus. The protein localises to the secreted. In terms of biological role, acts as a signaling pathway regulator involved in innate immune system response. In response to interferon IFN-alpha, associates in a complex with signaling pathway regulator NMI to regulate immune response; the complex formation prevents proteasome-mediated degradation of IFI35 and correlates with IFI35 dephosphorylation. In complex with NMI, inhibits virus-triggered type I interferon/IFN-beta production. In complex with NMI, negatively regulates nuclear factor NF-kappa-B signaling by inhibiting the nuclear translocation, activation and transcription of the NF-kappa-B subunit p65/RELA, resulting in the inhibition of endothelial cell proliferation, migration and re-endothelialization of injured arteries. Beside its role as an intracellular signaling pathway regulator, also functions extracellularly as damage-associated molecular patterns (DAMPs) to promote inflammation when actively released by macrophage to the extracellular space during cell injury and pathogen invasion. Macrophage-secreted IFI35 activates NF-kappa-B signaling in adjacent macrophages through Toll-like receptor 4/TLR4 activation, thereby inducing NF-kappa-B translocation from the cytoplasm into the nucleus which promotes the release of pro-inflammatory cytokines. In Homo sapiens (Human), this protein is Interferon-induced 35 kDa protein.